The sequence spans 330 residues: Flotillin-like protein FloA (330 aa).

Helical transmembrane passes span 6-26 (LFLL…FTFV) and 28-48 (VMLW…TLIG).

It belongs to the flotillin-like FloA family. In terms of assembly, homooligomerizes.

Its subcellular location is the cell membrane. The protein localises to the membrane raft. In terms of biological role, found in functional membrane microdomains (FMM) that may be equivalent to eukaryotic membrane rafts. FMMs are highly dynamic and increase in number as cells age. Flotillins are thought to be important factors in membrane fluidity. This is Flotillin-like protein FloA from Bacillus licheniformis (strain ATCC 14580 / DSM 13 / JCM 2505 / CCUG 7422 / NBRC 12200 / NCIMB 9375 / NCTC 10341 / NRRL NRS-1264 / Gibson 46).